The following is a 172-amino-acid chain: Biogenesis of lysosome-related organelles complex 1 subunit 6 (172 aa).

Disordered stretches follow at residues 1 to 36 (MSVPGPSSPDGALTRPPYCLEAGEPTPGLSDTSPDE) and 135 to 172 (RALKLQQKRQKEELEREQQREKEFEREKQLTARPAKRM). The stretch at 63–167 (DLQRSKQALQ…FEREKQLTAR (105 aa)) forms a coiled coil. The segment covering 143–164 (RQKEELEREQQREKEFEREKQL) has biased composition (basic and acidic residues).

Belongs to the BLOC1S6 family. In terms of assembly, interacts with BLOC1S4 and DTNBP1/BLOC1S7. Homodimer. Component of the biogenesis of lysosome-related organelles complex 1 (BLOC-1) composed of BLOC1S1, BLOC1S2, BLOC1S3, BLOC1S4, BLOC1S5, BLOC1S6, DTNBP1/BLOC1S7 and SNAPIN/BLOC1S8. Octamer composed of one copy each BLOC1S1, BLOC1S2, BLOC1S3, BLOC1S4, BLOC1S5, BLOC1S6, DTNBP1/BLOC1S7 and SNAPIN/BLOC1S8. The BLOC-1 complex associates with the AP-3 protein complex and membrane protein cargos. Interacts with BLOC1S5, F-actin, SNAP25 isoform 1 and isoform 2, SNAP47 and STX12. Post-translationally, phosphorylated. As to expression, widely expressed.

The protein resides in the cytoplasm. The protein localises to the membrane. Its function is as follows. Component of the BLOC-1 complex, a complex that is required for normal biogenesis of lysosome-related organelles (LRO), such as platelet dense granules and melanosomes. In concert with the AP-3 complex, the BLOC-1 complex is required to target membrane protein cargos into vesicles assembled at cell bodies for delivery into neurites and nerve terminals. The BLOC-1 complex, in association with SNARE proteins, is also proposed to be involved in neurite extension. May play a role in intracellular vesicle trafficking, particularly in the vesicle-docking and fusion process. This chain is Biogenesis of lysosome-related organelles complex 1 subunit 6 (BLOC1S6), found in Homo sapiens (Human).